The following is a 290-amino-acid chain: Shikimate dehydrogenase (NADP(+)) (290 aa).

Shikimate-binding positions include 20–22 (SLS) and T67. K71 (proton acceptor) is an active-site residue. 2 residues coordinate shikimate: N92 and D107. NADP(+) is bound by residues 132–136 (GAGGA) and M228. Position 230 (Y230) interacts with shikimate. Residue G251 participates in NADP(+) binding.

Belongs to the shikimate dehydrogenase family. Homodimer.

It carries out the reaction shikimate + NADP(+) = 3-dehydroshikimate + NADPH + H(+). Its pathway is metabolic intermediate biosynthesis; chorismate biosynthesis; chorismate from D-erythrose 4-phosphate and phosphoenolpyruvate: step 4/7. In terms of biological role, involved in the biosynthesis of the chorismate, which leads to the biosynthesis of aromatic amino acids. Catalyzes the reversible NADPH linked reduction of 3-dehydroshikimate (DHSA) to yield shikimate (SA). The protein is Shikimate dehydrogenase (NADP(+)) of Citrifermentans bemidjiense (strain ATCC BAA-1014 / DSM 16622 / JCM 12645 / Bem) (Geobacter bemidjiensis).